The chain runs to 249 residues: Aspartate/glutamate leucyltransferase (249 aa).

Belongs to the R-transferase family. Bpt subfamily.

The protein resides in the cytoplasm. It carries out the reaction N-terminal L-glutamyl-[protein] + L-leucyl-tRNA(Leu) = N-terminal L-leucyl-L-glutamyl-[protein] + tRNA(Leu) + H(+). The enzyme catalyses N-terminal L-aspartyl-[protein] + L-leucyl-tRNA(Leu) = N-terminal L-leucyl-L-aspartyl-[protein] + tRNA(Leu) + H(+). Functionally, functions in the N-end rule pathway of protein degradation where it conjugates Leu from its aminoacyl-tRNA to the N-termini of proteins containing an N-terminal aspartate or glutamate. The protein is Aspartate/glutamate leucyltransferase of Brucella anthropi (strain ATCC 49188 / DSM 6882 / CCUG 24695 / JCM 21032 / LMG 3331 / NBRC 15819 / NCTC 12168 / Alc 37) (Ochrobactrum anthropi).